We begin with the raw amino-acid sequence, 43 residues long: MRDLKTYLSTAPVLSTIWFGSLAGLLIEINRLFPDALTFPFFN.

The helical transmembrane segment at 7–27 threads the bilayer; the sequence is YLSTAPVLSTIWFGSLAGLLI.

Belongs to the PsaJ family.

The protein resides in the plastid. It is found in the chloroplast thylakoid membrane. Its function is as follows. May help in the organization of the PsaE and PsaF subunits. The chain is Photosystem I reaction center subunit IX from Vitis vinifera (Grape).